The following is a 447-amino-acid chain: ATP-dependent protease ATPase subunit HslU (447 aa).

Residues Ile17, 59-64, Asp256, Glu321, and Arg393 each bind ATP; that span reads GVGKTE.

This sequence belongs to the ClpX chaperone family. HslU subfamily. A double ring-shaped homohexamer of HslV is capped on each side by a ring-shaped HslU homohexamer. The assembly of the HslU/HslV complex is dependent on binding of ATP.

The protein resides in the cytoplasm. ATPase subunit of a proteasome-like degradation complex; this subunit has chaperone activity. The binding of ATP and its subsequent hydrolysis by HslU are essential for unfolding of protein substrates subsequently hydrolyzed by HslV. HslU recognizes the N-terminal part of its protein substrates and unfolds these before they are guided to HslV for hydrolysis. This chain is ATP-dependent protease ATPase subunit HslU, found in Stutzerimonas stutzeri (strain A1501) (Pseudomonas stutzeri).